Here is a 442-residue protein sequence, read N- to C-terminus: Serine hydroxymethyltransferase (442 aa).

Pyridoxal 5'-phosphate contacts are provided by residues tyrosine 54, 100–102, and histidine 236; that span reads SGS. An intrachain disulfide couples cysteine 125 to cysteine 364. Position 237 is an N6-(pyridoxal phosphate)lysine (lysine 237). Glycine 272 is a pyridoxal 5'-phosphate binding site.

The protein belongs to the SHMT family. As to quaternary structure, homodimer. It depends on pyridoxal 5'-phosphate as a cofactor.

The protein resides in the cytoplasm. It is found in the mitochondrion matrix. Its subcellular location is the plastid. It localises to the apicoplast. The protein localises to the nucleus. It catalyses the reaction (6R)-5,10-methylene-5,6,7,8-tetrahydrofolate + glycine + H2O = (6S)-5,6,7,8-tetrahydrofolate + L-serine. It functions in the pathway one-carbon metabolism; tetrahydrofolate interconversion. Its activity is regulated as follows. Redox regulation; active in reducing conditions, inactive in oxidizing conditions. The reduction of the cysteine pairs allows the access binding of the tetrahydrofolate substrate to its binding site. This mechanism appears to be unique to Plasmodium species. In terms of biological role, catalyzes the interconversion of serine to glycine accompanied with the production of 5,10-methylenetetrahydrofolate, a source of one-carbon units used by thymidylate synthase to convert dUMP to dTMP for DNA synthesis. Binds to its own mRNA and to the mRNA of bifunctional dihydrofolate reductase-thymidylate synthase (DHFR-TS) in vitro; the physiological relevance of this interaction is not clear. This is Serine hydroxymethyltransferase from Plasmodium falciparum (isolate 3D7).